The primary structure comprises 497 residues: Guanosine-5'-triphosphate,3'-diphosphate pyrophosphatase (497 aa).

This sequence belongs to the GppA/Ppx family. GppA subfamily.

The enzyme catalyses guanosine 3'-diphosphate 5'-triphosphate + H2O = guanosine 3',5'-bis(diphosphate) + phosphate + H(+). It participates in purine metabolism; ppGpp biosynthesis; ppGpp from GTP: step 2/2. In terms of biological role, catalyzes the conversion of pppGpp to ppGpp. Guanosine pentaphosphate (pppGpp) is a cytoplasmic signaling molecule which together with ppGpp controls the 'stringent response', an adaptive process that allows bacteria to respond to amino acid starvation, resulting in the coordinated regulation of numerous cellular activities. The protein is Guanosine-5'-triphosphate,3'-diphosphate pyrophosphatase of Photobacterium profundum (strain SS9).